A 1116-amino-acid chain; its full sequence is DNA-directed RNA polymerase subunit beta (1116 aa).

Over residues 1070–1100 (KIREEEKEREKEREAREMEDPEKIVSKIDAK) the composition is skewed to basic and acidic residues. Residues 1070-1116 (KIREEEKEREKEREAREMEDPEKIVSKIDAKQKKKYKKTKKQTEKKK) form a disordered region. Basic residues predominate over residues 1101–1116 (QKKKYKKTKKQTEKKK).

It belongs to the RNA polymerase beta chain family. In plastids the minimal PEP RNA polymerase catalytic core is composed of four subunits: alpha, beta, beta', and beta''. When a (nuclear-encoded) sigma factor is associated with the core the holoenzyme is formed, which can initiate transcription.

The protein resides in the plastid. It is found in the chloroplast. The enzyme catalyses RNA(n) + a ribonucleoside 5'-triphosphate = RNA(n+1) + diphosphate. In terms of biological role, DNA-dependent RNA polymerase catalyzes the transcription of DNA into RNA using the four ribonucleoside triphosphates as substrates. The chain is DNA-directed RNA polymerase subunit beta from Heterosigma akashiwo (Chromophytic alga).